A 527-amino-acid chain; its full sequence is Cytochrome P450 714B3 (527 aa).

Topologically, residues 1-14 (MEVAMAMAVKVLLS) are lumenal. A helical; Signal-anchor for type III membrane protein membrane pass occupies residues 15–35 (LCCVGACGLAVYLYHILWLVP). At 36-527 (QKVLAKFEDQ…SVCTKRGTAI (492 aa)) the chain is on the cytoplasmic side. Cys464 contributes to the heme binding site.

Belongs to the cytochrome P450 family. Requires heme as cofactor.

It localises to the membrane. May be involved in gibberellin metabolism. The sequence is that of Cytochrome P450 714B3 (CYP714B3) from Zea mays (Maize).